A 378-amino-acid polypeptide reads, in one-letter code: Ribosomal RNA large subunit methyltransferase G (378 aa).

This sequence belongs to the methyltransferase superfamily. RlmG family.

The protein resides in the cytoplasm. The enzyme catalyses guanosine(1835) in 23S rRNA + S-adenosyl-L-methionine = N(2)-methylguanosine(1835) in 23S rRNA + S-adenosyl-L-homocysteine + H(+). Its function is as follows. Specifically methylates the guanine in position 1835 (m2G1835) of 23S rRNA. In Shigella dysenteriae serotype 1 (strain Sd197), this protein is Ribosomal RNA large subunit methyltransferase G.